A 229-amino-acid polypeptide reads, in one-letter code: Peptidase E (229 aa).

Active-site charge relay system residues include Ser120, Asp135, and His157.

This sequence belongs to the peptidase S51 family.

Its subcellular location is the cytoplasm. It carries out the reaction Dipeptidase E catalyzes the hydrolysis of dipeptides Asp-|-Xaa. It does not act on peptides with N-terminal Glu, Asn or Gln, nor does it cleave isoaspartyl peptides.. Its function is as follows. Hydrolyzes dipeptides containing N-terminal aspartate residues. May play a role in allowing the cell to use peptide aspartate to spare carbon otherwise required for the synthesis of the aspartate family of amino acids. This Salmonella schwarzengrund (strain CVM19633) protein is Peptidase E.